An 838-amino-acid chain; its full sequence is Protein translocase subunit SecA (838 aa).

Residues Q86, 104–108, and D493 contribute to the ATP site; that span reads GEGKT. Disordered regions lie at residues 517–536 and 789–838; these read RRIDNQLRGRSGRQGDPGSS and KVAE…CCGQ. Basic and acidic residues predominate over residues 801–819; it reads TDGDSKAKRQPVRKKETVG. Zn(2+) is bound by residues C824, C826, C835, and C836.

The protein belongs to the SecA family. Monomer and homodimer. Part of the essential Sec protein translocation apparatus which comprises SecA, SecYEG and auxiliary proteins SecDF. Other proteins may also be involved. Zn(2+) is required as a cofactor.

It is found in the cell membrane. The protein localises to the cytoplasm. It carries out the reaction ATP + H2O + cellular proteinSide 1 = ADP + phosphate + cellular proteinSide 2.. Part of the Sec protein translocase complex. Interacts with the SecYEG preprotein conducting channel. Has a central role in coupling the hydrolysis of ATP to the transfer of proteins into and across the cell membrane, serving as an ATP-driven molecular motor driving the stepwise translocation of polypeptide chains across the membrane. This chain is Protein translocase subunit SecA, found in Halalkalibacterium halodurans (strain ATCC BAA-125 / DSM 18197 / FERM 7344 / JCM 9153 / C-125) (Bacillus halodurans).